Here is a 525-residue protein sequence, read N- to C-terminus: G-protein regulator 2 (525 aa).

Residues Pro-424–Leu-445 form the GoLoco domain. Positions Thr-489–Lys-525 are disordered.

In terms of assembly, interacts with gpr-1; gpr-1 forms a complex with lin-5 and GDP-bound goa-1.

The protein localises to the cytoplasm. It is found in the cell cortex. The protein resides in the cytoskeleton. Its subcellular location is the spindle. Functionally, in the 1-cell embryo, probably together with gpr-1, controls nuclear rotation and spindle elongation during mitosis. Complex of gpr-1 and gpr-2, in association with lin-5, activates G-protein signaling to affect mitotic spindle force. Polarity determinants (par genes) may regulate lin-5/gpr-1/gpr-2/goa-1 locally to create the asymmetric forces that drive spindle movement. The chain is G-protein regulator 2 (gpr-2) from Caenorhabditis elegans.